We begin with the raw amino-acid sequence, 270 residues long: NAD kinase (270 aa).

D57 acts as the Proton acceptor in catalysis. NAD(+) contacts are provided by residues 57-58, 125-126, R150, and N227; these read DG and NE.

It belongs to the NAD kinase family. A divalent metal cation is required as a cofactor.

It localises to the cytoplasm. It carries out the reaction NAD(+) + ATP = ADP + NADP(+) + H(+). In terms of biological role, involved in the regulation of the intracellular balance of NAD and NADP, and is a key enzyme in the biosynthesis of NADP. Catalyzes specifically the phosphorylation on 2'-hydroxyl of the adenosine moiety of NAD to yield NADP. This chain is NAD kinase, found in Ureaplasma parvum serovar 3 (strain ATCC 700970).